Consider the following 306-residue polypeptide: MNWITNYVRPKINSILGRREIPENLWIKDPTSGEMVFHKDLEANQYVIPASGHHMHISAKNRLMHFFDDGVYTPIENPKVVTDPLKFRDAKRYIDRLKEYRAKLGVDDNILSARGTIEGLPIIATVQDFAFMGGSLGMASGEAIIEAFHTAIADKCPLVLFAASGGARMQEGTLSLMQMPRTTVAIEMMKEARLPYIVVLTNPTTGGVTASYAMLGDVHIAEPGAMIGFAGPRVIQQTIRETLPEGFQSSEYLLEHGMVDMVVSRLDMKATIAKILRLMMKFPAAPEPSHAFSKDSQTQISKTKAA.

A CoA carboxyltransferase N-terminal domain is found at 25–294 (LWIKDPTSGE…APEPSHAFSK (270 aa)). The interval 287–306 (EPSHAFSKDSQTQISKTKAA) is disordered. Residues 294 to 306 (KDSQTQISKTKAA) show a composition bias toward polar residues.

Belongs to the AccD/PCCB family. As to quaternary structure, acetyl-CoA carboxylase is a heterohexamer composed of biotin carboxyl carrier protein (AccB), biotin carboxylase (AccC) and two subunits each of ACCase subunit alpha (AccA) and ACCase subunit beta (AccD).

It localises to the cytoplasm. It catalyses the reaction N(6)-carboxybiotinyl-L-lysyl-[protein] + acetyl-CoA = N(6)-biotinyl-L-lysyl-[protein] + malonyl-CoA. It participates in lipid metabolism; malonyl-CoA biosynthesis; malonyl-CoA from acetyl-CoA: step 1/1. Functionally, component of the acetyl coenzyme A carboxylase (ACC) complex. Biotin carboxylase (BC) catalyzes the carboxylation of biotin on its carrier protein (BCCP) and then the CO(2) group is transferred by the transcarboxylase to acetyl-CoA to form malonyl-CoA. This chain is Acetyl-coenzyme A carboxylase carboxyl transferase subunit beta, found in Bartonella bacilliformis (strain ATCC 35685 / KC583 / Herrer 020/F12,63).